A 175-amino-acid polypeptide reads, in one-letter code: Ribosome maturation factor RimM (175 aa).

The PRC barrel domain maps to 96 to 175 (DGDYYWKDLI…IIKVDWDPEF (80 aa)).

It belongs to the RimM family. As to quaternary structure, binds ribosomal protein uS19.

Its subcellular location is the cytoplasm. Functionally, an accessory protein needed during the final step in the assembly of 30S ribosomal subunit, possibly for assembly of the head region. Essential for efficient processing of 16S rRNA. May be needed both before and after RbfA during the maturation of 16S rRNA. It has affinity for free ribosomal 30S subunits but not for 70S ribosomes. This Baumannia cicadellinicola subsp. Homalodisca coagulata protein is Ribosome maturation factor RimM.